We begin with the raw amino-acid sequence, 328 residues long: MGVLRVGLCPGLTEEMIQLLRSHRIKTVVDLVSADLEEVAQKCGLSYKALVALRRVLLAQFSAFPVNGADLYEELKTSTAILSTGIGSLDKLLDAGLYTGEVTEIVGGPGSGKTQVCLCMAANVAHGLQQNVLYVDSNGGLTASRLLQLLQAKTQDEEEQAEALRRIQVVHAFDIFQMLDVLQELRGTVAQQVTGSSGTVKVVVVDSVTAVVSPLLGGQQREGLALMMQLARELKTLARDLGMAVVVTNHITRDRDSGRLKPALGRSWSFVPSTRILLDTIEGAGASGGRRMACLAKSSRQPTGFQEMVDIGTWGTSEQSATLQGDQT.

The tract at residues 1–83 (MGVLRVGLCP…ELKTSTAILS (83 aa)) is preferentially binds ssDNA. 107–114 (GGPGSGKT) contacts ATP.

The protein belongs to the RecA family. RAD51 subfamily. In terms of assembly, part of the BCDX2 complex consisting of RAD51B, RAD51C, RAD51D and XRCC2; the complex has a ring-like structure arranged into a flat disc around a central channel. In the absence of DNA, the BCDX2 subcomplex XRCC2:RAD51D formed a multimeric ring structure; in the presence of single-stranded DNA it formed a filamentous structure with the ssDNA. Interacts with SWSAP1 and ZSWIM7; involved in homologous recombination repair. Interacts with BLM; required for stimulation of BLM activity by the BCDX2 subcomplex XRCC2:RAD51D. In terms of tissue distribution, expressed in colon, prostate, spleen, testis, ovary, thymus and small intestine. Weakly expressed in leukocytes.

It localises to the nucleus. Its subcellular location is the cytoplasm. It is found in the cytoskeleton. The protein localises to the microtubule organizing center. The protein resides in the centrosome. It localises to the chromosome. Its subcellular location is the telomere. Involved in the homologous recombination repair (HRR) pathway of double-stranded DNA breaks arising during DNA replication or induced by DNA-damaging agents. Bind to single-stranded DNA (ssDNA) and has DNA-dependent ATPase activity. Part of the RAD51 paralog protein complex BCDX2 which acts in the BRCA1-BRCA2-dependent HR pathway. Upon DNA damage, BCDX2 acts downstream of BRCA2 recruitment and upstream of RAD51 recruitment. BCDX2 binds predominantly to the intersection of the four duplex arms of the Holliday junction and to junction of replication forks. The BCDX2 complex was originally reported to bind single-stranded DNA, single-stranded gaps in duplex DNA and specifically to nicks in duplex DNA. Involved in telomere maintenance. The BCDX2 subcomplex XRCC2:RAD51D can stimulate Holliday junction resolution by BLM. This chain is DNA repair protein RAD51 homolog 4 (RAD51D), found in Homo sapiens (Human).